The following is a 351-amino-acid chain: Leukotriene B4 receptor 1 (351 aa).

The Extracellular segment spans residues 1 to 21; it reads MAANTTSPAAPSSPGGMSLSL. A glycan (N-linked (GlcNAc...) asparagine) is linked at Asn-4. The chain crosses the membrane as a helical span at residues 22 to 44; it reads LPIVLLSVALAVGLPGNSFVVWS. The Cytoplasmic portion of the chain corresponds to 45–56; it reads ILKRMQKRTVTA. A helical membrane pass occupies residues 57 to 77; the sequence is LLVLNLALADLAVLLTAPFFL. At 78 to 93 the chain is on the extracellular side; it reads HFLARGTWSFREMGCR. The chain crosses the membrane as a helical span at residues 94 to 115; it reads LCHYVCGISMYASVLLITIMSL. Residues 116 to 140 lie on the Cytoplasmic side of the membrane; that stretch reads DRSLAVARPFMSQKVRTKAFARWVL. Residues 141 to 161 form a helical membrane-spanning segment; it reads AGIWVVSFLLAIPVLVYRTVK. Residues 162–179 lie on the Extracellular side of the membrane; the sequence is WNNRTLICAPNYPNKEHK. Asn-164 carries N-linked (GlcNAc...) asparagine glycosylation. The chain crosses the membrane as a helical span at residues 180–200; it reads VFHLLFEAITGFLLPFLAVVA. At 201 to 222 the chain is on the cytoplasmic side; it reads SYSDIGRRLQARRFRRSRRTGR. Residues 223-243 traverse the membrane as a helical segment; it reads LVVLIILAFAAFWLPYHLVNL. Over 244-268 the chain is Extracellular; it reads VEAGRTVAGWDKNSPAGQRLRLARY. The chain crosses the membrane as a helical span at residues 269 to 289; that stretch reads VLIALAFLSSSVNPVLYACAG. Over 290–351 the chain is Cytoplasmic; sequence GGLLRSAGVG…TSSTIPESSK (62 aa). Composition is skewed to polar residues over residues 311–326 and 339–351; these read EVSS…QTPK and SFMT…ESSK. Positions 311–351 are disordered; that stretch reads EVSSTRRGGTLVQTPKDTPACPEPGPTDSFMTSSTIPESSK.

Belongs to the G-protein coupled receptor 1 family. Phosphorylated by GRK6 upon leukotriene B4 binding; which promotes desensitization. Highly expressed on activated leukocytes, including eosinophils.

The protein localises to the cell membrane. Functionally, receptor for leukotriene B4, a potent chemoattractant involved in inflammation and immune response. In Mus musculus (Mouse), this protein is Leukotriene B4 receptor 1 (Ltb4r).